A 384-amino-acid polypeptide reads, in one-letter code: DNA dC-&gt;dU-editing enzyme APOBEC-3G (384 aa).

An essential for cytoplasmic localization region spans residues Met1–Ser60. The CMP/dCMP-type deaminase 1 domain occupies Arg29–Leu138. Thr32 carries the phosphothreonine; by PKA modification. Residues Lys42, Lys52, and Lys63 each participate in a (Microbial infection) Glycyl lysine isopeptide (Lys-Gly) (interchain with G-Cter in ubiquitin) cross-link. Positions 65, 97, and 100 each coordinate Zn(2+). Residues Lys150 and Lys163 each participate in a (Microbial infection) Glycyl lysine isopeptide (Lys-Gly) (interchain with G-Cter in ubiquitin) cross-link. The segment at Glu209 to Ser336 is necessary for homooligomerization. Residues Arg213–Arg215 form an interaction with DNA region. A CMP/dCMP-type deaminase 2 domain is found at Gly214–Leu328. Residue Thr218 is modified to Phosphothreonine; by PKA and CAMK2. Residue Lys249 forms a (Microbial infection) Glycyl lysine isopeptide (Lys-Gly) (interchain with G-Cter in ubiquitin) linkage. His257 contributes to the Zn(2+) binding site. Catalysis depends on Glu259, which acts as the Proton donor. Lys270 is covalently cross-linked ((Microbial infection) Glycyl lysine isopeptide (Lys-Gly) (interchain with G-Cter in ubiquitin)). Positions 288 and 291 each coordinate Zn(2+). Residues Lys297, Lys301, and Lys303 each participate in a (Microbial infection) Glycyl lysine isopeptide (Lys-Gly) (interchain with G-Cter in ubiquitin) cross-link. The segment at Arg313 to Arg320 is interaction with DNA. Residue Lys334 forms a (Microbial infection) Glycyl lysine isopeptide (Lys-Gly) (interchain with G-Cter in ubiquitin) linkage.

This sequence belongs to the cytidine and deoxycytidylate deaminase family. As to quaternary structure, homodimer. Homooligomer. Can bind RNA to form ribonucleoprotein complexes of high-molecular-mass (HMM) or low-molecular-mass (LMM). HMM is inactive and heterogeneous in protein composition because of binding nonselectively to cellular RNAs, which in turn are associated with variety of cellular proteins. The LMM form which is enzymatically active has few or no RNAs associated. Its ability to form homooligomer is distinct from its ability to assemble into HMM. Interacts with APOBEC3B, APOBEC3F, MOV10, AGO2, EIF4E, EIF4ENIF1, DCP2 and DDX6 in an RNA-dependent manner. Interacts with AGO1, AGO3 and PKA/PRKACA. In terms of assembly, (Microbial infection) Interacts with HIV-1 Vif; promoting its ubiquitination by a cullin-5-RING E3 ubiquitin-protein ligase complex (ECS complex) hijacked by the HIV-1 Vif. (Microbial infection) Interacts with HIV-1 reverse transcriptase/ribonuclease H. As to quaternary structure, (Microbial infection) Interacts with hepatitis B virus capsid protein. Zn(2+) serves as cofactor. In terms of processing, (Microbial infection) Following infection by HIV-1, ubiquitinated by a cullin-5-RING E3 ubiquitin-protein ligase complex (ECS complex) hijacked by the HIV-1 Vif protein, leading to its degradation. Deubiquitinated by USP49; leading to stabilization. Phosphorylation at Thr-32 reduces its binding to HIV-1 Vif and subsequent ubiquitination and degradation thus promoting its antiviral activity. As to expression, expressed in spleen, testes, ovary and peripheral blood leukocytes and CD4+ lymphocytes. Also expressed in non-permissive peripheral blood mononuclear cells, and several tumor cell lines; no expression detected in permissive lymphoid and non-lymphoid cell lines. Exists only in the LMM form in peripheral blood-derived resting CD4 T-cells and monocytes, both of which are refractory to HIV-1 infection. LMM is converted to a HMM complex when resting CD4 T-cells are activated or when monocytes are induced to differentiate into macrophages. This change correlates with increased susceptibility of these cells to HIV-1 infection.

It is found in the cytoplasm. The protein localises to the nucleus. The protein resides in the P-body. The catalysed reaction is a 2'-deoxycytidine in single-stranded DNA + H2O + H(+) = a 2'-deoxyuridine in single-stranded DNA + NH4(+). Its activity is regulated as follows. (Microbial infection) Antiviral activity is neutralized by the HIV-1 virion infectivity factor (Vif), that prevents its incorporation into progeny virions by both inhibiting its translation and/or by inducing its ubiquitination and subsequent degradation by the 26S proteasome. Can also be neutralized by simian immunodeficiency virus sooty mangabey monkey virus (SIV-sm) and chimpanzee immunodeficiency virus (SIV-cpz) Vif. Its function is as follows. DNA deaminase (cytidine deaminase) which acts as an inhibitor of retrovirus replication and retrotransposon mobility via deaminase-dependent and -independent mechanisms. Exhibits potent antiviral activity against Vif-deficient HIV-1. After the penetration of retroviral nucleocapsids into target cells of infection and the initiation of reverse transcription, it can induce the conversion of cytosine to uracil in the minus-sense single-strand viral DNA, leading to G-to-A hypermutations in the subsequent plus-strand viral DNA. The resultant detrimental levels of mutations in the proviral genome, along with a deamination-independent mechanism that works prior to the proviral integration, together exert efficient antiretroviral effects in infected target cells. Selectively targets single-stranded DNA and does not deaminate double-stranded DNA or single- or double-stranded RNA. Exhibits antiviral activity also against simian immunodeficiency viruses (SIVs), hepatitis B virus (HBV), equine infectious anemia virus (EIAV), xenotropic MuLV-related virus (XMRV) and simian foamy virus (SFV). May inhibit the mobility of LTR and non-LTR retrotransposons. This is DNA dC-&gt;dU-editing enzyme APOBEC-3G from Homo sapiens (Human).